Here is an 854-residue protein sequence, read N- to C-terminus: Zinc finger protein 341 (854 aa).

A C2H2-type 1; atypical zinc finger spans residues 53–76 (FLCGKCKKQFNSLPAFMTHKREQC). The tract at residues 152 to 217 (DQPMPQGPPP…GRPNPGGNGV (66 aa)) is disordered. The segment covering 163 to 176 (QSSLNMHSVPSYLT) has biased composition (polar residues). Residues 177-210 (QPPPPPPPPPPLPPPPPPQPPPPPPQSLGPPGRP) show a composition bias toward pro residues. C2H2-type zinc fingers lie at residues 322–344 (LKCS…IRSH) and 350–372 (FQCI…MQTH). The tract at residues 399–434 (SRQEDEESTGLGQPLPGAPQPQALSTAGEEEGDKPE) is disordered. The segment covering 408 to 422 (GLGQPLPGAPQPQAL) has biased composition (low complexity). C2H2-type zinc fingers lie at residues 445–467 (YLCQ…MTQH), 473–497 (YKCV…IKSH), 503–525 (YRCH…QYSH), 540–564 (YKCV…TATH), 566–588 (FPCP…LPTH), 594–616 (FKCQ…AHIH), 622–644 (YKCS…MLIH), 650–677 (YKCP…ILSH), and 683–705 (HKCA…QRAH). A disordered region spans residues 731–763 (CRLGPQKDKDLQTRRPPQRRAAPRSCGSGGRKV).

Belongs to the krueppel C2H2-type zinc-finger protein family. As to quaternary structure, binds DNA and to the STAT3 promoter.

Its subcellular location is the nucleus. Its function is as follows. Transcriptional activator of STAT3 involved in the regulation of immune homeostasis. Also able to activate STAT1 transcription. In Homo sapiens (Human), this protein is Zinc finger protein 341 (ZNF341).